A 1196-amino-acid chain; its full sequence is Tubulin-specific chaperone D (1196 aa).

HEAT repeat units lie at residues 363 to 401 (VIEQ…ADDV), 599 to 634 (YIAM…TYAL), 752 to 788 (SSIA…PGFL), and 1106 to 1142 (GDVR…VLTY).

The protein belongs to the TBCD family. As to quaternary structure, found in a complex with at least ARL2, PPP2CB, PPP2R1A, PPP2R2A, PPP2R5E and TBCD. Interacts with PPP2CB. Part of a supercomplex made of cofactors A to E. Cofactors A and D function by capturing and stabilizing tubulin in a quasi-native conformation. Cofactor E binds to the cofactor D-tubulin complex; interaction with cofactor C then causes the release of tubulin polypeptides that are committed to the native state. Interacts with ARL2; interaction is enhanced with the GDP-bound form of ARL2. Does not interact with ARL3, ARL4A and ARL4D. Interacts with beta tubulin. Interacts with TBCE.

It is found in the cell junction. It localises to the tight junction. The protein localises to the lateral cell membrane. Its subcellular location is the cytoplasm. The protein resides in the adherens junction. It is found in the cytoskeleton. It localises to the microtubule organizing center. The protein localises to the centrosome. Tubulin-folding protein implicated in the first step of the tubulin folding pathway and required for tubulin complex assembly. Involved in the regulation of microtubule polymerization or depolymerization, it modulates microtubule dynamics by capturing GTP-bound beta-tubulin (TUBB). Its ability to interact with beta tubulin is regulated via its interaction with ARL2. Acts as a GTPase-activating protein (GAP) for ARL2. Induces microtubule disruption in absence of ARL2. Increases degradation of beta tubulin, when overexpressed in polarized cells. Promotes epithelial cell detachment, a process antagonized by ARL2. Induces tight adherens and tight junctions disassembly at the lateral cell membrane. Required for correct assembly and maintenance of the mitotic spindle, and proper progression of mitosis. Involved in neuron morphogenesis. This is Tubulin-specific chaperone D (Tbcd) from Mus musculus (Mouse).